The sequence spans 148 residues: Ribose-5-P isomerase B (148 aa).

A D-ribulose 5-phosphate-binding site is contributed by 8–9 (DE). Cys-65 acts as the Proton acceptor in catalysis. D-ribulose 5-phosphate contacts are provided by residues 66–70 (GTGIG), Asn-99, Arg-132, and Lys-136.

It belongs to the LacAB/RpiB family.

The catalysed reaction is aldehydo-D-ribose 5-phosphate = D-ribulose 5-phosphate. It participates in carbohydrate degradation; pentose phosphate pathway; D-ribose 5-phosphate from D-ribulose 5-phosphate (non-oxidative stage): step 1/1. Catalyzes the interconversion of ribulose-5-P and ribose-5-P. The polypeptide is Ribose-5-P isomerase B (Listeria innocua serovar 6a (strain ATCC BAA-680 / CLIP 11262)).